A 176-amino-acid chain; its full sequence is Ribosome maturation factor RimM (176 aa).

Positions 97–176 (EDEFYWRDLI…QILVDWDPDF (80 aa)) constitute a PRC barrel domain.

Belongs to the RimM family. In terms of assembly, binds ribosomal protein uS19.

The protein localises to the cytoplasm. In terms of biological role, an accessory protein needed during the final step in the assembly of 30S ribosomal subunit, possibly for assembly of the head region. Essential for efficient processing of 16S rRNA. May be needed both before and after RbfA during the maturation of 16S rRNA. It has affinity for free ribosomal 30S subunits but not for 70S ribosomes. The protein is Ribosome maturation factor RimM of Shewanella sp. (strain ANA-3).